Here is an 83-residue protein sequence, read N- to C-terminus: Apolipoprotein C-I, acidic form (83 aa).

A signal peptide spans 1-26 (MRLFLSLPVLVVVLSMVLEGPAPAQG).

It belongs to the apolipoprotein C1 family.

It localises to the secreted. In terms of biological role, inhibitor of lipoprotein binding to the low density lipoprotein (LDL) receptor, LDL receptor-related protein, and very low density lipoprotein (VLDL) receptor. Associates with high density lipoproteins (HDL) and the triacylglycerol-rich lipoproteins in the plasma and makes up about 10% of the protein of the VLDL and 2% of that of HDL. Appears to interfere directly with fatty acid uptake and is also the major plasma inhibitor of cholesteryl ester transfer protein (CETP). Binds free fatty acids and reduces their intracellular esterification. Modulates the interaction of APOE with beta-migrating VLDL and inhibits binding of beta-VLDL to the LDL receptor-related protein. The polypeptide is Apolipoprotein C-I, acidic form (APOC1A) (Pongo abelii (Sumatran orangutan)).